The primary structure comprises 828 residues: Glycerol-3-phosphate acyltransferase (828 aa).

The HXXXXD motif motif lies at 309-314 (CHRSHI).

The protein belongs to the GPAT/DAPAT family.

Its subcellular location is the cell inner membrane. The enzyme catalyses sn-glycerol 3-phosphate + an acyl-CoA = a 1-acyl-sn-glycero-3-phosphate + CoA. It functions in the pathway phospholipid metabolism; CDP-diacylglycerol biosynthesis; CDP-diacylglycerol from sn-glycerol 3-phosphate: step 1/3. The chain is Glycerol-3-phosphate acyltransferase from Pseudomonas putida (strain W619).